A 539-amino-acid polypeptide reads, in one-letter code: CTP synthase (539 aa).

Positions 1 to 268 (MSFKSIFLTG…SDFLLNKLGF (268 aa)) are amidoligase domain. Ser14 lines the CTP pocket. Ser14 is a binding site for UTP. 15–20 (SLGKGL) provides a ligand contact to ATP. Position 55 (Tyr55) interacts with L-glutamine. Asp72 contributes to the ATP binding site. 2 residues coordinate Mg(2+): Asp72 and Glu142. CTP-binding positions include 149-151 (DIE), 188-193 (KTKPTQ), and Lys224. UTP is bound by residues 188 to 193 (KTKPTQ) and Lys224. The Glutamine amidotransferase type-1 domain maps to 294–532 (RIGLVGKYLE…IRAAKAYSLE (239 aa)). Position 353 (Gly353) interacts with L-glutamine. Cys380 acts as the Nucleophile; for glutamine hydrolysis in catalysis. L-glutamine-binding positions include 381 to 384 (LGMQ), Glu404, and Arg460. Active-site residues include His505 and Glu507.

The protein belongs to the CTP synthase family. As to quaternary structure, homotetramer.

It carries out the reaction UTP + L-glutamine + ATP + H2O = CTP + L-glutamate + ADP + phosphate + 2 H(+). It catalyses the reaction L-glutamine + H2O = L-glutamate + NH4(+). The enzyme catalyses UTP + NH4(+) + ATP = CTP + ADP + phosphate + 2 H(+). Its pathway is pyrimidine metabolism; CTP biosynthesis via de novo pathway; CTP from UDP: step 2/2. With respect to regulation, allosterically activated by GTP, when glutamine is the substrate; GTP has no effect on the reaction when ammonia is the substrate. The allosteric effector GTP functions by stabilizing the protein conformation that binds the tetrahedral intermediate(s) formed during glutamine hydrolysis. Inhibited by the product CTP, via allosteric rather than competitive inhibition. Functionally, catalyzes the ATP-dependent amination of UTP to CTP with either L-glutamine or ammonia as the source of nitrogen. Regulates intracellular CTP levels through interactions with the four ribonucleotide triphosphates. The chain is CTP synthase from Chlamydia trachomatis serovar L2 (strain ATCC VR-902B / DSM 19102 / 434/Bu).